Reading from the N-terminus, the 841-residue chain is Replication origin-binding protein (841 aa).

Residues 45–210 form the Helicase ATP-binding domain; the sequence is PLYPRTRNVL…AIMRGEENIH (166 aa). Residue 58 to 65 coordinates ATP; it reads APMGSGKT.

The protein belongs to the herpesviridae OriBP family. In terms of assembly, homodimer. Interacts with the major DNA-binding protein. Interacts with the DNA helicase/primase complex-associated protein and the polymerase accessory protein.

It localises to the host nucleus. Its function is as follows. Functions as a docking protein to recruit essential components of the viral replication machinery to viral DNA origins. In the presence of the major DNA-binding protein, opens dsDNA leading to a conformational change in the origin that facilitates DNA unwinding and subsequent replication. The protein is Replication origin-binding protein (MDV021) of Gallid herpesvirus 2 (strain Chicken/Md5/ATCC VR-987) (GaHV-2).